Reading from the N-terminus, the 281-residue chain is NAD kinase (281 aa).

The active-site Proton acceptor is D61. NAD(+) is bound by residues D61–G62, N134–D135, R145, D164, T175–S180, and Q234.

The protein belongs to the NAD kinase family. Requires a divalent metal cation as cofactor.

Its subcellular location is the cytoplasm. It carries out the reaction NAD(+) + ATP = ADP + NADP(+) + H(+). Its function is as follows. Involved in the regulation of the intracellular balance of NAD and NADP, and is a key enzyme in the biosynthesis of NADP. Catalyzes specifically the phosphorylation on 2'-hydroxyl of the adenosine moiety of NAD to yield NADP. This is NAD kinase from Clostridium botulinum (strain 657 / Type Ba4).